Consider the following 567-residue polypeptide: MKISRQAYADMYGPTVGDRVRLGDTELWIEVEEDHTHYGDEVKFGGGKVIRDGMGQSQRCDDAVMDTVITNALILDWWGIVKADVGIQKGRIAAIGKAGNPDTQPDVTIVIGPGTEIIAGEGKILTAGGIDPHIHFICPQQVEEALMSGVTTMLGGGTGPATGTNATTCTPGPWHIGKMLQAVDSLPMNIGFLGKGNASLPEALELQIKAGVIGLKLHEDWGTTPASIDNCLTVADQYDIQVAIHTDTLNESGFVEDTLAAFKGRCIHTFHTEGAGGGHAPDIITACSKDYVLPSSTNPTRPYTVNTVDEHLDMLMVCHHLDPNIPEDVAFADSRIRRETIAAEDILHDMGVISMISSDSQAMGRVGEVICRTWQTAHKMKVQRGLLPEDQERGADNFRAKRYIAKYTINPAITHGIAHDVGSVEVGKLADLVLWSPAFFGVKPACILKGGMIAAAPMGDPNASIPTPQPVHYRPMFGAFGKAASATRLTFVSQAALDAKIGEELGLDSPLSACKGVREVRKRHMKLNDACPHLTVDPQTYEVHADGELLTCEPATELPLAQLYHLF.

The Urease domain occupies 128–567 (GGIDPHIHFI…LPLAQLYHLF (440 aa)). 3 residues coordinate Ni(2+): His133, His135, and Lys216. N6-carboxylysine is present on Lys216. A substrate-binding site is contributed by His218. Positions 245 and 271 each coordinate Ni(2+). His319 serves as the catalytic Proton donor. Asp359 contacts Ni(2+).

It belongs to the metallo-dependent hydrolases superfamily. Urease alpha subunit family. Heterotrimer of UreA (gamma), UreB (beta) and UreC (alpha) subunits. Three heterotrimers associate to form the active enzyme. Ni cation is required as a cofactor. Carboxylation allows a single lysine to coordinate two nickel ions.

The protein resides in the cytoplasm. The enzyme catalyses urea + 2 H2O + H(+) = hydrogencarbonate + 2 NH4(+). Its pathway is nitrogen metabolism; urea degradation; CO(2) and NH(3) from urea (urease route): step 1/1. The polypeptide is Urease subunit alpha (Marinobacter nauticus (strain ATCC 700491 / DSM 11845 / VT8) (Marinobacter aquaeolei)).